We begin with the raw amino-acid sequence, 420 residues long: LanC-like protein 3 homolog (420 aa).

This sequence belongs to the LanC-like protein family.

This chain is LanC-like protein 3 homolog, found in Drosophila pseudoobscura pseudoobscura (Fruit fly).